A 262-amino-acid polypeptide reads, in one-letter code: Small ribosomal subunit protein eS1 (262 aa).

This sequence belongs to the eukaryotic ribosomal protein eS1 family. Component of the small ribosomal subunit. Mature ribosomes consist of a small (40S) and a large (60S) subunit. The 40S subunit contains about 33 different proteins and 1 molecule of RNA (18S). The 60S subunit contains about 49 different proteins and 3 molecules of RNA (25S, 5.8S and 5S).

It is found in the cytoplasm. The protein is Small ribosomal subunit protein eS1 of Cryptosporidium hominis.